Here is a 145-residue protein sequence, read N- to C-terminus: Globin-1 (145 aa).

One can recognise a Globin domain in the interval 1-145 (GISADQAKAL…VIVPGMKAGY (145 aa)). Heme b is bound by residues His-63 and His-92.

It belongs to the globin family. Monomer.

This is Globin-1 from Liolophura japonica (Chiton).